The primary structure comprises 1111 residues: NBPF family member NBPF9 (1111 aa).

A coiled-coil region spans residues 70-130; sequence MLRNERQFKE…RSLNEHLQAL (61 aa). The segment at 161–198 is disordered; it reads KLSPENDEDEDEDVQVEEDEKVLESSAPREVQKAEESK. The span at 165–181 shows a compositional bias: acidic residues; the sequence is ENDEDEDEDVQVEEDEK. The Olduvai 1 domain maps to 165 to 259; it reads ENDEDEDEDV…ECQDALNILP (95 aa). Positions 341–401 form a coiled coil; the sequence is MLRNERQFKE…RSLNEHLQAL (61 aa). 8 consecutive Olduvai domains span residues 436–528, 529–600, 601–692, 695–750, 751–843, 844–919, 920–1012, and 1013–1111; these read ENDN…HIIP, ENES…VDIG, RHRW…PSCP, SREL…LDLD, RIKK…RSKK, KRRR…LDVD, and ERRR…IFPQ. Disordered stretches follow at residues 451–474 and 510–569; these read EKVQ…PEDS and TLIG…STPS. 2 stretches are compositionally biased toward acidic residues: residues 530-539 and 550-562; these read NESDDEEEEE and ESEE…ESWD. Disordered regions lie at residues 829–871 and 999–1033; these read KKGK…LDEK and KGKG…PRLN. 2 stretches are compositionally biased toward basic residues: residues 831 to 849 and 1000 to 1018; these read GKGK…RRGR.

It belongs to the NBPF family. In terms of tissue distribution, expressed in a neuroblastoma cell line.

Its subcellular location is the cytoplasm. The protein is NBPF family member NBPF9 of Homo sapiens (Human).